Reading from the N-terminus, the 300-residue chain is 3-methyl-2-oxobutanoate hydroxymethyltransferase (300 aa).

Mg(2+) contacts are provided by D75 and D118. Residues 75 to 76, D118, and K147 contribute to the 3-methyl-2-oxobutanoate site; that span reads DS. E149 contributes to the Mg(2+) binding site. E216 serves as the catalytic Proton acceptor.

Belongs to the PanB family. In terms of assembly, homodecamer; pentamer of dimers. Mg(2+) is required as a cofactor.

The protein resides in the cytoplasm. It catalyses the reaction 3-methyl-2-oxobutanoate + (6R)-5,10-methylene-5,6,7,8-tetrahydrofolate + H2O = 2-dehydropantoate + (6S)-5,6,7,8-tetrahydrofolate. It participates in cofactor biosynthesis; (R)-pantothenate biosynthesis; (R)-pantoate from 3-methyl-2-oxobutanoate: step 1/2. Its function is as follows. Catalyzes the reversible reaction in which hydroxymethyl group from 5,10-methylenetetrahydrofolate is transferred onto alpha-ketoisovalerate to form ketopantoate. The sequence is that of 3-methyl-2-oxobutanoate hydroxymethyltransferase from Verminephrobacter eiseniae (strain EF01-2).